The primary structure comprises 305 residues: MRIEWACWLFGYFVSSVGSERSLSYRYHLESNSSANVVCNGNISVFVNGTLGVRYNITVGISSSLLIGHLTIQTLESWFTPWVQNKSYSKQPLSTTETLYNIDSENIHRVSQYFHTRWIKSLQENHTCDLTNSTPTYTYQANVNNTNYLTLTSSGWQDRLNYTAINSTHFNLTESNITSIHKYLNTTCIERLRNYTLEPVYTTAVPQNVTPEHAITTLYTTPPNAITIKDTTQSHTVQTPSFNDTHNVTEHTLNISYVLSQKTNNTTSPWVYAIPMGATATIGAGLYIGKHFTPVKFVYEVWRGQ.

An N-terminal signal peptide occupies residues 1-19 (MRIEWACWLFGYFVSSVGS). Residues 20-270 (ERSLSYRYHL…QKTNNTTSPW (251 aa)) lie on the Lumenal side of the membrane. The helical transmembrane segment at 271–288 (VYAIPMGATATIGAGLYI) threads the bilayer. The Cytoplasmic segment spans residues 289–305 (GKHFTPVKFVYEVWRGQ).

As to quaternary structure, interacts with host MICA and ULBP3.

The protein localises to the host endoplasmic reticulum membrane. It localises to the host Golgi apparatus membrane. In terms of biological role, participates in the inhibition of the host immune response. Prevents host NK cell-mediated lysis of the infected cell by preventing the KLRK1 ligand 3/ULBP3 trafficking to the cell surface. Also retains another KLRK1 ligand, MHC class I-related chain A/MICA, in the Golgi apparatus to avoid its surface expression. The sequence is that of Membrane glycoprotein UL142 (UL142) from Homo sapiens (Human).